The chain runs to 137 residues: Protein shisa-5 (137 aa).

A helical membrane pass occupies residues 3 to 23 (FGATLAVGLTIFVLSVVTIII).

This sequence belongs to the shisa family. As to quaternary structure, interacts with PDCD6; PDCD6 can stabilize SHISA5.

Its subcellular location is the endoplasmic reticulum membrane. The protein resides in the nucleus membrane. Its function is as follows. Can induce apoptosis in a caspase-dependent manner and plays a role in p53/TP53-dependent apoptosis. In Pongo abelii (Sumatran orangutan), this protein is Protein shisa-5 (SHISA5).